We begin with the raw amino-acid sequence, 921 residues long: Protein translocase subunit SecA (921 aa).

ATP-binding positions include Gln-87, 105–109 (GEGKT), and Asp-501. Positions 831 to 886 (PFPVINTETSGPSEEPAGLFSQGTTGGDIPAPQPMAGFPSAAPMPPRPQPVPTGAE) are disordered. Positions 872 to 881 (APMPPRPQPV) are enriched in pro residues. Cys-905, Cys-907, Cys-916, and His-917 together coordinate Zn(2+).

Belongs to the SecA family. As to quaternary structure, monomer and homodimer. Part of the essential Sec protein translocation apparatus which comprises SecA, SecYEG and auxiliary proteins SecDF-YajC and YidC. It depends on Zn(2+) as a cofactor.

Its subcellular location is the cell inner membrane. It localises to the cytoplasm. It catalyses the reaction ATP + H2O + cellular proteinSide 1 = ADP + phosphate + cellular proteinSide 2.. Functionally, part of the Sec protein translocase complex. Interacts with the SecYEG preprotein conducting channel. Has a central role in coupling the hydrolysis of ATP to the transfer of proteins into and across the cell membrane, serving both as a receptor for the preprotein-SecB complex and as an ATP-driven molecular motor driving the stepwise translocation of polypeptide chains across the membrane. This chain is Protein translocase subunit SecA, found in Gluconobacter oxydans (strain 621H) (Gluconobacter suboxydans).